Consider the following 701-residue polypeptide: Elongation factor G (701 aa).

In terms of domain architecture, tr-type G spans 6–285; the sequence is HKVRNIGIMA…AVVAYLPNPL (280 aa). Residues 15-22, 79-83, and 133-136 contribute to the GTP site; these read AHIDAGKT, DNPGH, and NKMD.

This sequence belongs to the TRAFAC class translation factor GTPase superfamily. Classic translation factor GTPase family. EF-G/EF-2 subfamily.

The protein resides in the cytoplasm. In terms of biological role, catalyzes the GTP-dependent ribosomal translocation step during translation elongation. During this step, the ribosome changes from the pre-translocational (PRE) to the post-translocational (POST) state as the newly formed A-site-bound peptidyl-tRNA and P-site-bound deacylated tRNA move to the P and E sites, respectively. Catalyzes the coordinated movement of the two tRNA molecules, the mRNA and conformational changes in the ribosome. This chain is Elongation factor G (fusA), found in Micrococcus luteus (Micrococcus lysodeikticus).